Consider the following 273-residue polypeptide: Formamidopyrimidine-DNA glycosylase (273 aa).

The active-site Schiff-base intermediate with DNA is Pro-2. The active-site Proton donor is Glu-3. The Proton donor; for beta-elimination activity role is filled by Lys-60. 3 residues coordinate DNA: His-94, Arg-113, and Arg-154. The FPG-type zinc-finger motif lies at Asn-239–Arg-273. The Proton donor; for delta-elimination activity role is filled by Arg-263.

Belongs to the FPG family. Monomer. It depends on Zn(2+) as a cofactor.

It catalyses the reaction Hydrolysis of DNA containing ring-opened 7-methylguanine residues, releasing 2,6-diamino-4-hydroxy-5-(N-methyl)formamidopyrimidine.. The enzyme catalyses 2'-deoxyribonucleotide-(2'-deoxyribose 5'-phosphate)-2'-deoxyribonucleotide-DNA = a 3'-end 2'-deoxyribonucleotide-(2,3-dehydro-2,3-deoxyribose 5'-phosphate)-DNA + a 5'-end 5'-phospho-2'-deoxyribonucleoside-DNA + H(+). Functionally, involved in base excision repair of DNA damaged by oxidation or by mutagenic agents. Acts as a DNA glycosylase that recognizes and removes damaged bases. Has a preference for oxidized purines, such as 7,8-dihydro-8-oxoguanine (8-oxoG). Has AP (apurinic/apyrimidinic) lyase activity and introduces nicks in the DNA strand. Cleaves the DNA backbone by beta-delta elimination to generate a single-strand break at the site of the removed base with both 3'- and 5'-phosphates. The protein is Formamidopyrimidine-DNA glycosylase of Roseiflexus sp. (strain RS-1).